A 413-amino-acid chain; its full sequence is Sprouty-related, EVH1 domain-containing protein 2 (413 aa).

Residues 5–122 (THPNDDSYIV…RGVRKALEDL (118 aa)) enclose the WH1 domain. The tract at residues 122-163 (LTEGSTTSSSTLQNEAELGDDDVFTTATDSSSNSSQKKDHST) is disordered. Positions 195–248 (FSRNLFPFEDEEIVRINPRERWMITGYEDYRYAAVPDKFIQPEDSDSYVQISKN) constitute a KBD domain. The 109-residue stretch at 303 to 411 (RCVYCRDMFN…CGCCGGKHKA (109 aa)) folds into the SPR domain.

It localises to the cell membrane. Its subcellular location is the cytoplasmic vesicle. The protein localises to the secretory vesicle membrane. It is found in the cytoplasm. Its function is as follows. Negatively regulates Ras signaling pathways and downstream activation of MAP kinases. The protein is Sprouty-related, EVH1 domain-containing protein 2 (spred2) of Danio rerio (Zebrafish).